Consider the following 357-residue polypeptide: Embryonic growth/differentiation factor 1 (357 aa).

Positions 1 to 23 are cleaved as a signal peptide; it reads MLPVCHRFCDHLLLLLLLPSTTL. The propeptide occupies 24 to 237; it reads APAPASMGPA…RLCPLPRLRR (214 aa). N-linked (GlcNAc...) asparagine glycosylation is present at asparagine 191. 3 disulfides stabilise this stretch: cysteine 251–cysteine 322, cysteine 280–cysteine 354, and cysteine 284–cysteine 356.

This sequence belongs to the TGF-beta family. In terms of assembly, homodimer; disulfide-linked. As to expression, expressed almost exclusively in the nervous system.

It localises to the secreted. Its function is as follows. May mediate cell differentiation events during embryonic development. This chain is Embryonic growth/differentiation factor 1 (Gdf1), found in Mus musculus (Mouse).